Reading from the N-terminus, the 136-residue chain is Large-conductance mechanosensitive channel (136 aa).

2 helical membrane-spanning segments follow: residues 9–29 and 79–99; these read AFASRGNVIDMAVGIIIGAAF and IQTVIDFTIIAFAIFMGLKAI.

The protein belongs to the MscL family. As to quaternary structure, homopentamer.

The protein localises to the cell inner membrane. Its function is as follows. Channel that opens in response to stretch forces in the membrane lipid bilayer. May participate in the regulation of osmotic pressure changes within the cell. This Shewanella putrefaciens (strain CN-32 / ATCC BAA-453) protein is Large-conductance mechanosensitive channel.